Here is a 125-residue protein sequence, read N- to C-terminus: Prefoldin subunit beta (125 aa).

It belongs to the prefoldin subunit beta family. As to quaternary structure, heterohexamer of two alpha and four beta subunits.

Its subcellular location is the cytoplasm. Molecular chaperone capable of stabilizing a range of proteins. Seems to fulfill an ATP-independent, HSP70-like function in archaeal de novo protein folding. In Halobacterium salinarum (strain ATCC 29341 / DSM 671 / R1), this protein is Prefoldin subunit beta.